Reading from the N-terminus, the 221-residue chain is MQIYQPHPWPLTVEEAITIQEELRHQVITEDQFTQPVQYVAGVDMGFEADGTISRAAVAVLSFPDLQVIETNLAYRPTSFPYIPGFLSFREIPAVLDALAKVQTKPDIILCDGQGIAHPRRLGIASHLGVLLNIPTIGVAKSLLIGKHEELADTKGSWQPLIHRGEIIGAVLRTRVGVKPVYVSSGHKISLPTAIDYVLRCTPKYRLPETTRVADKLASNR.

Mg(2+) is bound by residues aspartate 44 and aspartate 112.

The protein belongs to the endonuclease V family. Requires Mg(2+) as cofactor.

It localises to the cytoplasm. The catalysed reaction is Endonucleolytic cleavage at apurinic or apyrimidinic sites to products with a 5'-phosphate.. DNA repair enzyme involved in the repair of deaminated bases. Selectively cleaves double-stranded DNA at the second phosphodiester bond 3' to a deoxyinosine leaving behind the intact lesion on the nicked DNA. The protein is Endonuclease V of Nostoc sp. (strain PCC 7120 / SAG 25.82 / UTEX 2576).